We begin with the raw amino-acid sequence, 312 residues long: DNA primase small subunit PriS (312 aa).

Residues aspartate 88, aspartate 90, and aspartate 215 contribute to the active site.

This sequence belongs to the eukaryotic-type primase small subunit family. Heterodimer of a small subunit (PriS) and a large subunit (PriL). It depends on Mg(2+) as a cofactor. Requires Mn(2+) as cofactor.

Its function is as follows. Catalytic subunit of DNA primase, an RNA polymerase that catalyzes the synthesis of short RNA molecules used as primers for DNA polymerase during DNA replication. The small subunit contains the primase catalytic core and has DNA synthesis activity on its own. Binding to the large subunit stabilizes and modulates the activity, increasing the rate of DNA synthesis while decreasing the length of the DNA fragments, and conferring RNA synthesis capability. The DNA polymerase activity may enable DNA primase to also catalyze primer extension after primer synthesis. May also play a role in DNA repair. This Pyrobaculum calidifontis (strain DSM 21063 / JCM 11548 / VA1) protein is DNA primase small subunit PriS.